We begin with the raw amino-acid sequence, 126 residues long: Holo-[acyl-carrier-protein] synthase (126 aa).

The Mg(2+) site is built by D9 and E58.

This sequence belongs to the P-Pant transferase superfamily. AcpS family. Mg(2+) is required as a cofactor.

Its subcellular location is the cytoplasm. It catalyses the reaction apo-[ACP] + CoA = holo-[ACP] + adenosine 3',5'-bisphosphate + H(+). Functionally, transfers the 4'-phosphopantetheine moiety from coenzyme A to a Ser of acyl-carrier-protein. The polypeptide is Holo-[acyl-carrier-protein] synthase (Yersinia pseudotuberculosis serotype I (strain IP32953)).